Reading from the N-terminus, the 942-residue chain is Eukaryotic translation initiation factor 3 subunit A (942 aa).

In terms of domain architecture, PCI spans 320 to 494; it reads FKKYSSIILL…NTVTFFKDPF (175 aa). Coiled coils occupy residues 499 to 529, 588 to 669, 705 to 734, and 821 to 912; these read KAAG…GEEI, ITQT…KQRE, SKLS…AYRK, and IEEV…RKAQ. The tract at residues 502 to 546 is disordered; that stretch reads GTVEEEEEEEEEEGEEVEGEEAETGEEIVEEGEEHENEENKEPEP. Positions 504–538 are enriched in acidic residues; that stretch reads VEEEEEEEEEEGEEVEGEEAETGEEIVEEGEEHEN. 2 stretches are compositionally biased toward basic and acidic residues: residues 836 to 870 and 889 to 911; these read RKAE…ERKS and RSAK…ERKA. Residues 836-942 are disordered; the sequence is RKAEIEAEER…KMKLRRASKK (107 aa).

This sequence belongs to the eIF-3 subunit A family. As to quaternary structure, component of the eukaryotic translation initiation factor 3 (eIF-3) complex.

The protein localises to the cytoplasm. Its function is as follows. RNA-binding component of the eukaryotic translation initiation factor 3 (eIF-3) complex, which is involved in protein synthesis of a specialized repertoire of mRNAs and, together with other initiation factors, stimulates binding of mRNA and methionyl-tRNAi to the 40S ribosome. The eIF-3 complex specifically targets and initiates translation of a subset of mRNAs involved in cell proliferation. In Vanderwaltozyma polyspora (strain ATCC 22028 / DSM 70294 / BCRC 21397 / CBS 2163 / NBRC 10782 / NRRL Y-8283 / UCD 57-17) (Kluyveromyces polysporus), this protein is Eukaryotic translation initiation factor 3 subunit A.